The following is a 339-amino-acid chain: Erlin-2 (339 aa).

At 1 to 3 (MAQ) the chain is on the cytoplasmic side. A helical transmembrane segment spans residues 4–24 (LGAVVAVASSFFCASLFSAVH). Residues 25–339 (KIEEGHIGVY…EPLETATKDN (315 aa)) are Extracellular-facing. Residue Asn-106 is glycosylated (N-linked (GlcNAc...) asparagine). The segment at 177-309 (EAIRRNYELM…DIPNMFMDSA (133 aa)) is interaction with ERLIN1. An N6-acetyllysine modification is found at Lys-267.

This sequence belongs to the band 7/mec-2 family. In terms of assembly, forms a heteromeric complex with ERLIN1. In complex with ERLIN1, interacts with RNF170. Interacts with activated ITPR1, independently of the degree of ITPR1 polyubiquitination. Interacts with SCAP, INSIG1, SREBF1 and SREBF2 under cholesterol sufficiency conditions; indicative for an association with the SCAP-SREBP-INSIG complex. Probably part of an AMFR/gp78 and INSIG1-containing ubiquitin ligase complex involved in ERAD of HMGCR. Interacts with TMUB1; TMUB1 bridges the association with AMFR. Interacts with SYVN1 and RNF139. Interacts with TMEM259. Interacts with TMEM41B. Deubiquitinated by USP25; leading to stabilization.

The protein resides in the endoplasmic reticulum membrane. In terms of biological role, component of the ERLIN1/ERLIN2 complex which mediates the endoplasmic reticulum-associated degradation (ERAD) of inositol 1,4,5-trisphosphate receptors (IP3Rs) such as ITPR1. Promotes sterol-accelerated ERAD of HMGCR probably implicating an AMFR/gp78-containing ubiquitin ligase complex. Involved in regulation of cellular cholesterol homeostasis by regulation the SREBP signaling pathway. May promote ER retention of the SCAP-SREBF complex. This chain is Erlin-2, found in Rattus norvegicus (Rat).